We begin with the raw amino-acid sequence, 126 residues long: MSREFKRSDRVAQELQKEIAVILQREVKDPRIGMVTVSDVEVSRDLAYAKIFVTFLFDNDQDIIAQGMKGLEKAGPYIRTLLGKAMRLRILPELRFIYDQSLVEGMRMSNLVSNVIKSDQAKHKED.

This sequence belongs to the RbfA family. As to quaternary structure, monomer. Binds 30S ribosomal subunits, but not 50S ribosomal subunits or 70S ribosomes.

It is found in the cytoplasm. Functionally, one of several proteins that assist in the late maturation steps of the functional core of the 30S ribosomal subunit. Associates with free 30S ribosomal subunits (but not with 30S subunits that are part of 70S ribosomes or polysomes). Required for efficient processing of 16S rRNA. May interact with the 5'-terminal helix region of 16S rRNA. This is Ribosome-binding factor A from Haemophilus ducreyi (strain 35000HP / ATCC 700724).